We begin with the raw amino-acid sequence, 225 residues long: MNSIEFPLLDRTTQNSVISTTPNDLSNWSRLSSLWPLLYGTSCCFIEFASLIGSRFDFDRYGLVPRSSPRQADLILTAGTVTMKMAPSLVRLYEQMPEPKYVIAMGACTITGGMFSTDSYSTVRGVDKLIPVDVYLPGCPPKPEAVIDAITKLRKKVSREIYEDRIWPQQESRCFTTNHKFHVGRSTHTGNYDQGLLYQSPSTSEIPSEIFFKYKSSVSSHELVN.

Residues Cys43, Cys44, Cys108, and Cys139 each coordinate [4Fe-4S] cluster.

The protein belongs to the complex I 20 kDa subunit family. NDH is composed of at least 16 different subunits, 5 of which are encoded in the nucleus. [4Fe-4S] cluster serves as cofactor.

The protein localises to the plastid. It localises to the chloroplast thylakoid membrane. The catalysed reaction is a plastoquinone + NADH + (n+1) H(+)(in) = a plastoquinol + NAD(+) + n H(+)(out). It carries out the reaction a plastoquinone + NADPH + (n+1) H(+)(in) = a plastoquinol + NADP(+) + n H(+)(out). Functionally, NDH shuttles electrons from NAD(P)H:plastoquinone, via FMN and iron-sulfur (Fe-S) centers, to quinones in the photosynthetic chain and possibly in a chloroplast respiratory chain. The immediate electron acceptor for the enzyme in this species is believed to be plastoquinone. Couples the redox reaction to proton translocation, and thus conserves the redox energy in a proton gradient. The protein is NAD(P)H-quinone oxidoreductase subunit K, chloroplastic of Platanus occidentalis (Sycamore).